The following is a 46-amino-acid chain: PhoP/PhoQ regulator MgrB (46 aa).

Residues 6–26 traverse the membrane as a helical segment; the sequence is WVALVVVVLACLLLWAQVFNM.

This sequence belongs to the MgrB family. As to quaternary structure, may form homooligomers. Probably interacts with the periplasmic domain of PhoQ.

The protein resides in the cell inner membrane. Its function is as follows. PhoP-regulated transcription is redox-sensitive, being activated when the periplasm becomes more reducing. MgrB acts between DsbA/DsbB and PhoP/PhoQ in this pathway. Represses PhoP/PhoQ signaling, possibly by binding to the periplasmic domain of PhoQ, altering its activity and that of downstream effector PhoP. The polypeptide is PhoP/PhoQ regulator MgrB (Escherichia coli O6:K15:H31 (strain 536 / UPEC)).